A 482-amino-acid polypeptide reads, in one-letter code: MLKIHNSQSKQLEDFTPLTPGQVKMYVCGPTVYNFLHVGNFRGPVVFNMVRNWLEHLGYKVTYALNFTDVDDKIINRANELGMSPTELSEKYIAEYKKDFASLGLRPHDMNPKVTEHMDDIRSMVESLVSQKKAYEAQGDVLYSIESFKDYGKLSGRNTDDLLAGARVEVDEKKRNPMDFALWKAAKPGEVSWPSPWGPGRPGWHIECSAMIKNLFGDQIDIHGGGMDLIFPHHENEIAQSEGCTGKAFVKYWMHNNMLNFGGQKMSKSLGNIVTMREFLEMYNAEIYKWMILSAHYRTLSDFGDEAVERAVGGLSRVYSALSMAESYLTPEVTQEDAAFAKITQDAWKKVEEAMNHDFGTPDAFAAMFEVVRQFNAQVRRGMKANPAIQGKALAFHNFVRKMGSMMSLFQEPAHAFLIKLDDMLLKKMNLERSAVDALVAERGEARAAKDFAKSDELRAKITALGISVSDTPEGSFWEVTK.

C28 is a binding site for Zn(2+). A 'HIGH' region motif is present at residues 30-40 (PTVYNFLHVGN). Residues C208, H233, and E237 each contribute to the Zn(2+) site. A 'KMSKS' region motif is present at residues 265-269 (KMSKS). Residue K268 participates in ATP binding.

It belongs to the class-I aminoacyl-tRNA synthetase family. Monomer. Zn(2+) is required as a cofactor.

Its subcellular location is the cytoplasm. It catalyses the reaction tRNA(Cys) + L-cysteine + ATP = L-cysteinyl-tRNA(Cys) + AMP + diphosphate. This is Cysteine--tRNA ligase from Bdellovibrio bacteriovorus (strain ATCC 15356 / DSM 50701 / NCIMB 9529 / HD100).